A 60-amino-acid chain; its full sequence is Large ribosomal subunit protein uL30 (60 aa).

Belongs to the universal ribosomal protein uL30 family. In terms of assembly, part of the 50S ribosomal subunit.

In Streptococcus uberis (strain ATCC BAA-854 / 0140J), this protein is Large ribosomal subunit protein uL30.